Here is a 608-residue protein sequence, read N- to C-terminus: Threonine--tRNA ligase (608 aa).

The tract at residues 1-143 (MRVLYIHAER…VFKPEEAKTE (143 aa)) is editing domain. 2 catalytic regions span residues 194-490 (PKYL…PRLP) and 195-490 (KYLD…PRLP). 3 residues coordinate Zn(2+): cysteine 287, histidine 338, and histidine 459.

This sequence belongs to the class-II aminoacyl-tRNA synthetase family. Homodimer. It depends on Zn(2+) as a cofactor.

Its subcellular location is the cytoplasm. It catalyses the reaction tRNA(Thr) + L-threonine + ATP = L-threonyl-tRNA(Thr) + AMP + diphosphate + H(+). Functionally, catalyzes the attachment of threonine to tRNA(Thr) in a two-step reaction: L-threonine is first activated by ATP to form Thr-AMP and then transferred to the acceptor end of tRNA(Thr). Also edits incorrectly charged L-seryl-tRNA(Thr). This Pyrobaculum arsenaticum (strain DSM 13514 / JCM 11321 / PZ6) protein is Threonine--tRNA ligase.